Consider the following 808-residue polypeptide: Na(+)/H(+) antiporter 2 (808 aa).

9 consecutive transmembrane segments (helical) span residues 12–32, 36–56, 70–90, 105–125, 128–148, 174–194, 203–223, 244–264, and 267–287; these read HVAYSCVGIFSSIFSLVSLFV, LYIGESMVASIFGLIVGPHCL, ITLEISRILLCLQVFAVSVEL, LLVPVMTSGWLVIALFVWILV, LNFPASLLMGACITATDPVLA, CNDGLAIPFVFLSLDLLLYPG, WICVTILWECIFGSILGCIIG, FLAFYLILALTCAGFGSMLGV, and LLVSFFAGTAFAWDGWFAAKT. The N-linked (GlcNAc...) asparagine glycan is linked to N291. The next 5 membrane-spanning stretches (helical) occupy residues 294-314, 319-339, 361-381, 409-429, and 432-452; these read NVIDVLLNYAYFVYLGSILPW, NPDIGLDVWRLILLSLVVIFL, AMFIGHFGPIGVGAVFAAITS, VMACIWPITCFSIMTSVIVHG, and VAVIMLGRYLSTVTLMALPTG. 2 disordered regions span residues 478-499 and 541-562; these read QRLDKEPSLSPGQIGGRTSGMV and HASTNDSHGTTTANLGTSNGRA. The span at 542–561 shows a compositional bias: polar residues; that stretch reads ASTNDSHGTTTANLGTSNGR. 2 N-linked (GlcNAc...) asparagine glycosylation sites follow: N545 and N602. A disordered region spans residues 774-808; that stretch reads LHSEDEMADDEAESENDMDYEDSDGPASRFKDHAD. Residues 779–797 show a composition bias toward acidic residues; it reads EMADDEAESENDMDYEDSD.

This sequence belongs to the fungal Na(+)/H(+) exchanger family.

The protein resides in the membrane. In terms of biological role, sodium export from cell, takes up external protons in exchange for internal sodium ions. Seems to be poorly expressed. The sequence is that of Na(+)/H(+) antiporter 2 (SOD22) from Zygosaccharomyces rouxii.